Here is a 345-residue protein sequence, read N- to C-terminus: Meiotic recombination protein rec12 (345 aa).

In terms of domain architecture, Topo IIA-type catalytic spans 5–137 (DKKKVVRSWI…LNVEASAKGL (133 aa)). The active-site O-(5'-phospho-DNA)-tyrosine intermediate is the Y98. 2 residues coordinate Mg(2+): E179 and D229.

Belongs to the TOP6A family. In terms of assembly, component of the DSB catalytic core (DSBC) complex, composed of at least rec12, rec6 and rec14. The complex interacts with mde2. The cofactor is Mg(2+).

Its subcellular location is the cytoplasm. It is found in the nucleus. It carries out the reaction ATP-dependent breakage, passage and rejoining of double-stranded DNA.. Required for formation of the double-strand breaks (DSBs) that initiate meiotic recombination. Required for crossover recombination and chiasmatic segregation of chromosomes during meiosis I. Also involved in the faithful equational segregation of chromosomes during meiosis II. The sequence is that of Meiotic recombination protein rec12 from Schizosaccharomyces pombe (strain 972 / ATCC 24843) (Fission yeast).